The following is a 224-amino-acid chain: Small ribosomal subunit protein uS3 (224 aa).

The 70-residue stretch at 20–89 (LDEFLANYFK…NVNITVSPVP (70 aa)) folds into the KH type-2 domain.

The protein belongs to the universal ribosomal protein uS3 family. In terms of assembly, part of the 30S ribosomal subunit.

Binds the lower part of the 30S subunit head. The polypeptide is Small ribosomal subunit protein uS3 (Staphylothermus marinus (strain ATCC 43588 / DSM 3639 / JCM 9404 / F1)).